The primary structure comprises 201 residues: Recombination protein RecR (201 aa).

Residues 59–74 (CEICGNMDTENMCRIC) form a C4-type zinc finger. Residues 82–177 (SIIAIVETVA…KISRLASGIP (96 aa)) enclose the Toprim domain.

This sequence belongs to the RecR family.

May play a role in DNA repair. It seems to be involved in an RecBC-independent recombinational process of DNA repair. It may act with RecF and RecO. The sequence is that of Recombination protein RecR from Rickettsia conorii (strain ATCC VR-613 / Malish 7).